The sequence spans 554 residues: uncharacterized protein (554 aa).

This is an uncharacterized protein from Acidianus sp. F28 (AFV-2).